The primary structure comprises 851 residues: DNA mismatch repair protein MutS (851 aa).

602 to 609 (GPNMSGKS) provides a ligand contact to ATP.

This sequence belongs to the DNA mismatch repair MutS family.

Its function is as follows. This protein is involved in the repair of mismatches in DNA. It is possible that it carries out the mismatch recognition step. This protein has a weak ATPase activity. This chain is DNA mismatch repair protein MutS, found in Streptococcus pyogenes serotype M28 (strain MGAS6180).